Here is a 156-residue protein sequence, read N- to C-terminus: Large ribosomal subunit protein uL15 (156 aa).

Over residues 1-16 the composition is skewed to basic residues; the sequence is MVRRFKRGTKYRRGSR. The interval 1–37 is disordered; that stretch reads MVRRFKRGTKYRRGSRTHGWGRVGQHRKSGGSGGKGM.

This sequence belongs to the universal ribosomal protein uL15 family. As to quaternary structure, part of the 50S ribosomal subunit.

Functionally, binds to the 23S rRNA. This Pyrobaculum aerophilum (strain ATCC 51768 / DSM 7523 / JCM 9630 / CIP 104966 / NBRC 100827 / IM2) protein is Large ribosomal subunit protein uL15.